Reading from the N-terminus, the 511-residue chain is 2-isopropylmalate synthase (511 aa).

Residues 5 to 267 form the Pyruvate carboxyltransferase domain; sequence LIVFDTTLRD…DTNVDISQIV (263 aa). The Mn(2+) site is built by D14, H202, H204, and N238. The tract at residues 393 to 511 is regulatory domain; it reads KLSWLKVVSE…YPVERAYPQV (119 aa).

The protein belongs to the alpha-IPM synthase/homocitrate synthase family. LeuA type 1 subfamily. In terms of assembly, homodimer. The cofactor is Mn(2+).

It is found in the cytoplasm. It catalyses the reaction 3-methyl-2-oxobutanoate + acetyl-CoA + H2O = (2S)-2-isopropylmalate + CoA + H(+). It participates in amino-acid biosynthesis; L-leucine biosynthesis; L-leucine from 3-methyl-2-oxobutanoate: step 1/4. Functionally, catalyzes the condensation of the acetyl group of acetyl-CoA with 3-methyl-2-oxobutanoate (2-ketoisovalerate) to form 3-carboxy-3-hydroxy-4-methylpentanoate (2-isopropylmalate). In Nitrosococcus oceani (strain ATCC 19707 / BCRC 17464 / JCM 30415 / NCIMB 11848 / C-107), this protein is 2-isopropylmalate synthase.